The sequence spans 2325 residues: Centriolin (2325 aa).

The interval 1–33 is disordered; that stretch reads MKKGSQQKIFSKAKIPSSSHSPIPSSMSNMRSR. Over residues 16–33 the composition is skewed to low complexity; sequence PSSSHSPIPSSMSNMRSR. 4 LRR repeats span residues 126 to 147, 148 to 169, 170 to 191, and 194 to 215; these read KLEV…DKLL, KLRE…ENMC, NLQK…LGKK, and SLRV…SKLK. The LRRCT domain maps to 228 to 266; it reads NPVVTLPHYLQFTIFHLRSLESLEGQPVTTQDRQEAFER. Coiled coils occupy residues 267–343 and 435–799; these read FSLE…IELT and LDTQ…LNHV. Serine 831 carries the post-translational modification Phosphoserine. A coiled-coil region spans residues 851-1101; the sequence is LARSKWERDE…ARLQNVLDLT (251 aa). The disordered stretch occupies residues 1150–1241; it reads PSSKVSSHSS…DQEEPPFVPP (92 aa). The span at 1224 to 1235 shows a compositional bias: acidic residues; sequence SQEESELDDQEE. A coiled-coil region spans residues 1317–2255; it reads EHHNLENEVS…DRLKAQLRHC (939 aa). Residue serine 1475 is modified to Phosphoserine. The tract at residues 1948–2118 is required for centrosome localization; the sequence is MMFQRLQKER…ELVAQDNHER (171 aa). Residues 1985-2325 are sufficient for interaction with HOOK2; it reads QKSKLDQVLS…QNQEKNASAR (341 aa). The tract at residues 2288–2325 is disordered; it reads VTSTSADSASSPSLSQLESSLTEDSQLGQNQEKNASAR. Over residues 2290 to 2314 the composition is skewed to low complexity; sequence STSADSASSPSLSQLESSLTEDSQL. Residues 2315 to 2325 are compositionally biased toward polar residues; that stretch reads GQNQEKNASAR.

As to quaternary structure, interacts with HOOK2. Interacts with EXOC6 and SNAPIN. Associates with the exocyst complex. Widely expressed with highest levels in testis and trachea.

Its subcellular location is the cytoplasm. It localises to the cytoskeleton. The protein resides in the microtubule organizing center. The protein localises to the centrosome. It is found in the midbody. Its subcellular location is the midbody ring. Functionally, involved in cell cycle progression and cytokinesis. During the late steps of cytokinesis, anchors exocyst and SNARE complexes at the midbody, thereby allowing secretory vesicle-mediated abscission. This is Centriolin (CNTRL) from Homo sapiens (Human).